The sequence spans 236 residues: Eukaryotic translation initiation factor 3 subunit K (236 aa).

In terms of domain architecture, PCI spans 48–218; the sequence is CDCNANRTLL…EAKKAEIRED (171 aa).

It belongs to the eIF-3 subunit K family.

The protein localises to the cytoplasm. In terms of biological role, component of the eukaryotic translation initiation factor 3 (eIF-3) complex, which is involved in protein synthesis of a specialized repertoire of mRNAs and, together with other initiation factors, stimulates binding of mRNA and methionyl-tRNAi to the 40S ribosome. The eIF-3 complex specifically targets and initiates translation of a subset of mRNAs involved in cell proliferation. In Pyricularia oryzae (strain Y34) (Rice blast fungus), this protein is Eukaryotic translation initiation factor 3 subunit K.